The following is a 123-amino-acid chain: Large ribosomal subunit protein uL29 (123 aa).

It belongs to the universal ribosomal protein uL29 family. In terms of assembly, component of the large ribosomal subunit.

The protein localises to the cytoplasm. Its function is as follows. Component of the large ribosomal subunit. The ribosome is a large ribonucleoprotein complex responsible for the synthesis of proteins in the cell. Plays an essential role in early embryonic development. May act as a haploinsufficient tumor suppressor. The chain is Large ribosomal subunit protein uL29 (rpl35) from Danio rerio (Zebrafish).